Reading from the N-terminus, the 419-residue chain is Adenylosuccinate synthetase 1 (419 aa).

11–17 (GDEGKGK) is a binding site for GTP. D12 acts as the Proton acceptor in catalysis. Positions 12 and 39 each coordinate Mg(2+). IMP contacts are provided by residues 12 to 15 (DEGK), 37 to 40 (NAGH), R138, Q220, and R298. H40 (proton donor) is an active-site residue. 294 to 300 (TVSKRPR) provides a ligand contact to substrate. GTP-binding positions include R300, 326-328 (NVD), and 407-409 (SYG).

The protein belongs to the adenylosuccinate synthetase family. As to quaternary structure, homodimer. Requires Mg(2+) as cofactor.

It localises to the cytoplasm. The catalysed reaction is IMP + L-aspartate + GTP = N(6)-(1,2-dicarboxyethyl)-AMP + GDP + phosphate + 2 H(+). Its pathway is purine metabolism; AMP biosynthesis via de novo pathway; AMP from IMP: step 1/2. Functionally, plays an important role in the de novo pathway of purine nucleotide biosynthesis. Catalyzes the first committed step in the biosynthesis of AMP from IMP. The protein is Adenylosuccinate synthetase 1 of Photorhabdus laumondii subsp. laumondii (strain DSM 15139 / CIP 105565 / TT01) (Photorhabdus luminescens subsp. laumondii).